Reading from the N-terminus, the 447-residue chain is Vasoactive intestinal polypeptide receptor (447 aa).

Over 1 to 103 (MCDVVNEIEL…VDDDSFFRSV (103 aa)) the chain is Extracellular. Disulfide bonds link C15/C36, C27/C69, and C50/C86. N17, N22, N64, and N91 each carry an N-linked (GlcNAc...) asparagine glycan. A helical membrane pass occupies residues 104–128 (KIGYTIGHSVSLISLTTAIVILCMS). Over 129 to 135 (RKLHCTR) the chain is Cytoplasmic. Residues 136–155 (NYIHMHLFVSFILKAIAVFV) traverse the membrane as a helical segment. At 156–178 (KDAVLYDVIQESDNCSTASVGCK) the chain is on the extracellular side. The N-linked (GlcNAc...) asparagine glycan is linked to N169. A disulfide bridge connects residues C177 and C247. A helical membrane pass occupies residues 179 to 202 (AVIVFFQYCIMASFFWLLVEGLYL). Topologically, residues 203 to 216 (HALLAVSFFSERKY) are cytoplasmic. Residues 217-238 (FWWYILIGWGGPTIFIMAWSFA) traverse the membrane as a helical segment. The Extracellular segment spans residues 239–256 (KAYFNDVGCWDIIENSDL). Residues 257-280 (FWWIIKTPILASILMNFILFICII) form a helical membrane-spanning segment. Residues 281 to 305 (RILRQKINCPDIGRNESNQYSRLAK) are Cytoplasmic-facing. The helical transmembrane segment at 306–325 (STLLLIPLFGINFIIFAFIP) threads the bilayer. The Extracellular segment spans residues 326–337 (ENIKTELRLVFD). The helical transmembrane segment at 338–357 (LILGSFQGFVVAVLYCFLNG) threads the bilayer. Topologically, residues 358–447 (EVQAEIKRKW…KGHEDVREVS (90 aa)) are cytoplasmic.

This sequence belongs to the G-protein coupled receptor 2 family.

Its subcellular location is the cell membrane. Its function is as follows. This is a receptor for VIP. The activity of this receptor is mediated by G proteins which activate adenylyl cyclase. In Carassius auratus (Goldfish), this protein is Vasoactive intestinal polypeptide receptor (vipr1).